A 550-amino-acid chain; its full sequence is Selinene synthase (550 aa).

Residues Asp-314, Asp-318, Asp-450, and Glu-458 each contribute to the Mg(2+) site. The DDXXD motif signature appears at 314-318; sequence DDIYD.

The protein belongs to the terpene synthase family. It depends on Mg(2+) as a cofactor. Requires Mn(2+) as cofactor.

It catalyses the reaction (2E,6E)-farnesyl diphosphate = (+)-beta-selinene + diphosphate. The enzyme catalyses (2E,6E)-farnesyl diphosphate = alpha-selinene + diphosphate. It functions in the pathway secondary metabolite biosynthesis; terpenoid biosynthesis. Its function is as follows. Sesquiterpene synthase that catalyzes the formation of alpha- and beta-selinene from trans,trans-farnesyl diphosphate (FPP). Also produces some nerolidol. This is Selinene synthase (SES) from Ocimum basilicum (Sweet basil).